Here is a 98-residue protein sequence, read N- to C-terminus: Large ribosomal subunit protein mL53 (98 aa).

Belongs to the mitochondrion-specific ribosomal protein mL53 family. As to quaternary structure, component of the mitochondrial large ribosomal subunit (mt-LSU). Mature N.crassa 74S mitochondrial ribosomes consist of a small (37S) and a large (54S) subunit. The 37S small subunit contains a 16S ribosomal RNA (16S mt-rRNA) and 32 different proteins. The 54S large subunit contains a 23S rRNA (23S mt-rRNA) and 42 different proteins.

It localises to the mitochondrion. Component of the mitochondrial ribosome (mitoribosome), a dedicated translation machinery responsible for the synthesis of mitochondrial genome-encoded proteins, including at least some of the essential transmembrane subunits of the mitochondrial respiratory chain. The mitoribosomes are attached to the mitochondrial inner membrane and translation products are cotranslationally integrated into the membrane. The chain is Large ribosomal subunit protein mL53 (mrpl44) from Neurospora crassa (strain ATCC 24698 / 74-OR23-1A / CBS 708.71 / DSM 1257 / FGSC 987).